A 195-amino-acid polypeptide reads, in one-letter code: Large ribosomal subunit protein uL11m (195 aa).

It belongs to the universal ribosomal protein uL11 family. In terms of assembly, component of the mitochondrial ribosome large subunit (39S) which comprises a 16S rRNA and about 50 distinct proteins.

Its subcellular location is the mitochondrion. This chain is Large ribosomal subunit protein uL11m (mrpl-11), found in Caenorhabditis elegans.